A 188-amino-acid polypeptide reads, in one-letter code: Achaete-scute homolog 5 (188 aa).

The basic motif stretch occupies residues 80–93 (AFIQKRNERERQRV). Residues 80–132 (AFIQKRNERERQRVKCVNEGYARLRGHLPGALTEKRLSKVETLRAAIRYIKYL) form the bHLH domain. A helix-loop-helix motif region spans residues 94-132 (KCVNEGYARLRGHLPGALTEKRLSKVETLRAAIRYIKYL). The interval 139-188 (TPDGAPPPATSPPPAHTGHSNVPQPSSLVAESSGSPFSSSPFLESEEPSL) is disordered. Over residues 142–153 (GAPPPATSPPPA) the composition is skewed to pro residues. A compositionally biased stretch (polar residues) spans 158–168 (SNVPQPSSLVA). The span at 169 to 181 (ESSGSPFSSSPFL) shows a compositional bias: low complexity.

Interacts with transcription factor TCF3/E12. As to expression, expressed in teeth (at protein level).

The protein localises to the nucleus. Its function is as follows. Transcription factor. Probably binds E-box motifs 5'-CANNTG-3' in complex with transcription factor TCF3/E12. Negatively modulates transcription of target genes such as CDH1/E-cadherin, perhaps by recruiting the PRC2 repressive complex to regulatory elements. Regulates ameloblast development and tooth germ growth, perhaps acting by positively modulating migration of inner enamel epithelium (IEE) cells. Plays a role in enamel formation. This is Achaete-scute homolog 5 from Mus musculus (Mouse).